Consider the following 271-residue polypeptide: Effector CFEM6 (271 aa).

An N-terminal signal peptide occupies residues 1 to 17; it reads MKYSMITLGAFAMMAVA. In terms of domain architecture, CFEM spans 18–111; the sequence is QLSSLPACGQ…LGPATAVVAS (94 aa). 4 cysteine pairs are disulfide-bonded: C25–C68, C29–C63, C42–C49, and C51–C84. D46 is a binding site for heme. S247 is lipidated: GPI-anchor amidated serine. A propeptide spans 248–271 (removed in mature form); the sequence is SAGGARQTAFAGLAAAAGFAAIIL.

Belongs to the RBT5 family.

It is found in the cell membrane. The protein resides in the secreted. The protein localises to the host nucleus. Its subcellular location is the host cell membrane. It localises to the host chloroplast envelope. Functionally, appears to function during host infection, and may play a role in suppressing the host immune response. In Marssonina brunnea f. sp. multigermtubi (strain MB_m1) (Marssonina leaf spot fungus), this protein is Effector CFEM6.